The following is a 330-amino-acid chain: Inactive serine protease 45 (330 aa).

The N-terminal stretch at 1–35 is a signal peptide; that stretch reads MATSLRLLDAGPGSLRRWIPTCFAALLLLPPRPNL. A Peptidase S1 domain is found at 45–291; it reads VCGAPWWSDS…YTGWIKEQVS (247 aa). 4 cysteine pairs are disulfide-bonded: Cys-75-Cys-91, Cys-172-Cys-249, Cys-207-Cys-230, and Cys-239-Cys-267. The N-linked (GlcNAc...) asparagine glycan is linked to Asn-272.

It belongs to the peptidase S1 family.

It is found in the secreted. This Rattus norvegicus (Rat) protein is Inactive serine protease 45 (Prss45).